The primary structure comprises 74 residues: XTSATATYAKTQDWGSCFEGKWTIKNTAACSSYPSWVAGRSYAAGDIVYYTDXGYTDLPVSRQKMCQNGMVTNC.

The N-terminus of 70 kDa chitinase stretch occupies residues Xaa1–Thr27. The tract at residues Ala28 to Asp52 is N-terminus of 30 kDa chitinase. The segment at Xaa53–Cys74 is N-terminus of 20.5 kDa chitinase.

It belongs to the glycosyl hydrolase 18 family. Chitinase class II subfamily. As to quaternary structure, homodimer, but homotrimers and homotetramers could be observed for the 20.5 and 30 kDa chitinases. The 70 kDa chitinase is probably the precursor protein of the 30 and 20.5 kDa chitinases.

It catalyses the reaction Random endo-hydrolysis of N-acetyl-beta-D-glucosaminide (1-&gt;4)-beta-linkages in chitin and chitodextrins.. In terms of biological role, able to cleave chitin oligomers from N=3 to 6. The sequence is that of Chitinases 70, 30, and 20.5 kDa from Streptomyces olivaceoviridis (Streptomyces corchorusii).